Reading from the N-terminus, the 158-residue chain is Ribosome-binding factor A (158 aa).

The segment at 130 to 158 is disordered; that stretch reads TAQYAGDADPYKHDDEAEAEGDEFESDEE. Over residues 145-158 the composition is skewed to acidic residues; the sequence is EAEAEGDEFESDEE.

This sequence belongs to the RbfA family. In terms of assembly, monomer. Binds 30S ribosomal subunits, but not 50S ribosomal subunits or 70S ribosomes.

It is found in the cytoplasm. In terms of biological role, one of several proteins that assist in the late maturation steps of the functional core of the 30S ribosomal subunit. Associates with free 30S ribosomal subunits (but not with 30S subunits that are part of 70S ribosomes or polysomes). Required for efficient processing of 16S rRNA. May interact with the 5'-terminal helix region of 16S rRNA. This Bifidobacterium longum subsp. infantis (strain ATCC 15697 / DSM 20088 / JCM 1222 / NCTC 11817 / S12) protein is Ribosome-binding factor A.